We begin with the raw amino-acid sequence, 425 residues long: Gamma-glutamyl phosphate reductase (425 aa).

Belongs to the gamma-glutamyl phosphate reductase family.

It localises to the cytoplasm. It carries out the reaction L-glutamate 5-semialdehyde + phosphate + NADP(+) = L-glutamyl 5-phosphate + NADPH + H(+). The protein operates within amino-acid biosynthesis; L-proline biosynthesis; L-glutamate 5-semialdehyde from L-glutamate: step 2/2. Catalyzes the NADPH-dependent reduction of L-glutamate 5-phosphate into L-glutamate 5-semialdehyde and phosphate. The product spontaneously undergoes cyclization to form 1-pyrroline-5-carboxylate. The polypeptide is Gamma-glutamyl phosphate reductase (Aromatoleum aromaticum (strain DSM 19018 / LMG 30748 / EbN1) (Azoarcus sp. (strain EbN1))).